The primary structure comprises 519 residues: 2-isopropylmalate synthase (519 aa).

One can recognise a Pyruvate carboxyltransferase domain in the interval 12 to 274; that stretch reads VVIFDTTLRD…WCNVESTTLT (263 aa). Residues D21, H209, H211, and N245 each contribute to the Mn(2+) site. The regulatory domain stretch occupies residues 398–519; the sequence is RLVSLTVIAG…QREAPVAAAS (122 aa).

The protein belongs to the alpha-IPM synthase/homocitrate synthase family. LeuA type 1 subfamily. As to quaternary structure, homodimer. Mn(2+) is required as a cofactor.

It is found in the cytoplasm. It carries out the reaction 3-methyl-2-oxobutanoate + acetyl-CoA + H2O = (2S)-2-isopropylmalate + CoA + H(+). Its pathway is amino-acid biosynthesis; L-leucine biosynthesis; L-leucine from 3-methyl-2-oxobutanoate: step 1/4. Catalyzes the condensation of the acetyl group of acetyl-CoA with 3-methyl-2-oxobutanoate (2-ketoisovalerate) to form 3-carboxy-3-hydroxy-4-methylpentanoate (2-isopropylmalate). This is 2-isopropylmalate synthase from Afipia carboxidovorans (strain ATCC 49405 / DSM 1227 / KCTC 32145 / OM5) (Oligotropha carboxidovorans).